Reading from the N-terminus, the 118-residue chain is Basic phospholipase A2 nigexine (118 aa).

Cystine bridges form between C11/C70, C26/C117, C28/C44, C43/C98, C50/C91, C59/C84, and C77/C89. Positions 27, 29, and 31 each coordinate Ca(2+). The active site involves H47. Residue D48 coordinates Ca(2+). The Coagulation factor Xa binding motif signature appears at 52–69 (EKAGKMGCWPYFTLYKYK). D92 is an active-site residue.

The protein belongs to the phospholipase A2 family. Group I subfamily. D49 sub-subfamily. The cofactor is Ca(2+). Expressed by the venom gland.

The protein resides in the secreted. It catalyses the reaction a 1,2-diacyl-sn-glycero-3-phosphocholine + H2O = a 1-acyl-sn-glycero-3-phosphocholine + a fatty acid + H(+). Its function is as follows. Snake venom phospholipase A2 (PLA2) that shows anticoagulant activity, has cytotoxic activity and affects neuromuscular transmission in vitro. PLA2 catalyzes the calcium-dependent hydrolysis of the 2-acyl groups in 3-sn-phosphoglycerides. The polypeptide is Basic phospholipase A2 nigexine (Naja pallida (Red spitting cobra)).